The sequence spans 163 residues: Ribosome maturation factor RimP (163 aa).

The protein belongs to the RimP family.

The protein localises to the cytoplasm. Functionally, required for maturation of 30S ribosomal subunits. In Polynucleobacter necessarius subsp. necessarius (strain STIR1), this protein is Ribosome maturation factor RimP.